The chain runs to 204 residues: Peptide deformylase (204 aa).

Fe cation is bound by residues Cys131 and His174. Residue Glu175 is part of the active site. His178 is a binding site for Fe cation.

This sequence belongs to the polypeptide deformylase family. It depends on Fe(2+) as a cofactor.

The enzyme catalyses N-terminal N-formyl-L-methionyl-[peptide] + H2O = N-terminal L-methionyl-[peptide] + formate. In terms of biological role, removes the formyl group from the N-terminal Met of newly synthesized proteins. Requires at least a dipeptide for an efficient rate of reaction. N-terminal L-methionine is a prerequisite for activity but the enzyme has broad specificity at other positions. The protein is Peptide deformylase of Streptococcus agalactiae serotype III (strain NEM316).